We begin with the raw amino-acid sequence, 378 residues long: Cyclic di-GMP phosphodiesterase response regulator RpfG (378 aa).

In terms of domain architecture, Response regulatory spans Asn29–Leu147. 4-aspartylphosphate is present on Asp80. The HD-GYP domain occupies Val174–Thr371.

As to quaternary structure, interacts with a subset of GGDEF domain-containing proteins. Post-translationally, phosphorylated and activated by RpfC.

The protein localises to the cytoplasm. It carries out the reaction 3',3'-c-di-GMP + 2 H2O = 2 GMP + 2 H(+). Member of the two-component regulatory system RpfG/RpfC, which is involved in the perception and response to the diffusible signaling factor (DSF), which is essential for cell-cell signaling. Detection of DSF leads to the positive regulation of biofilm dispersal and the production of virulence factors. Activated RpfG degrades cyclic di-GMP to GMP, leading to the activation of Clp, a global transcriptional regulator that regulates a large set of genes in DSF pathway. May also directly control genes involved in biofilm dispersal. This chain is Cyclic di-GMP phosphodiesterase response regulator RpfG (rpfG), found in Xanthomonas campestris pv. campestris (strain 8004).